Consider the following 1382-residue polypeptide: Hepatocyte growth factor receptor (1382 aa).

Residues 1 to 24 (MKAPTALAPGILLLLLTLAQRSHG) form the signal peptide. Topologically, residues 25-935 (ECKEALVKSE…IVQPDQNFAG (911 aa)) are extracellular. Positions 27 to 516 (KEALVKSEMN…TGKKITKIPL (490 aa)) constitute a Sema domain. The N-linked (GlcNAc...) asparagine glycan is linked to Asn45. 4 disulfide bridges follow: Cys95–Cys101, Cys98–Cys160, Cys133–Cys141, and Cys173–Cys176. Asn106 is a glycosylation site (N-linked (GlcNAc...) asparagine). Residues Asn203 and Asn359 are each glycosylated (N-linked (GlcNAc...) asparagine). 2 cysteine pairs are disulfide-bonded: Cys299-Cys364 and Cys386-Cys398. 2 N-linked (GlcNAc...) asparagine glycosylation sites follow: Asn400 and Asn406. 4 disulfide bridges follow: Cys521-Cys539, Cys527-Cys562, Cys530-Cys546, and Cys542-Cys552. IPT/TIG domains lie at 564-656 (PAVY…FSYV), 658-740 (PVIT…FSYR), and 743-837 (PVVS…LTYV). Residue Thr583 is glycosylated (O-linked (Man) threonine). Residues Asn608 and Asn636 are each glycosylated (N-linked (GlcNAc...) asparagine). Thr677 and Thr762 each carry an O-linked (Man) threonine glycan. N-linked (GlcNAc...) asparagine glycans are attached at residues Asn786 and Asn880. The helical transmembrane segment at 936-956 (LIIGAVSISVVVLLVSGLFLW) threads the bilayer. The Cytoplasmic portion of the chain corresponds to 957 to 1379 (LRKRKHKDLG…LPSQDNIDGE (423 aa)). Ser967 is modified (phosphoserine). A Phosphothreonine modification is found at Thr978. Ser991, Ser998, and Ser1001 each carry phosphoserine. Tyr1004 bears the Phosphotyrosine mark. A Protein kinase domain is found at 1079–1346 (VHFNEVIGRG…RISSIFSTFI (268 aa)). Residues 1085-1093 (IGRGHFGCV) and Lys1111 contribute to the ATP site. Asp1205 functions as the Proton acceptor in the catalytic mechanism. The segment at 1213–1382 (LDEKFTVKVA…QDNIDGEANT (170 aa)) is interaction with RANBP9. Position 1231 is a phosphotyrosine (Tyr1231). Phosphotyrosine; by autocatalysis is present on residues Tyr1235 and Tyr1236. Thr1290 is subject to Phosphothreonine. The segment at 1321-1360 (WHPKAEMRPSVSELVSRISSIFSTFIGEHYVHVNATYVNV) is interaction with MUC20. Phosphotyrosine; by autocatalysis is present on residues Tyr1350 and Tyr1357. Tyr1366 carries the phosphotyrosine modification.

It belongs to the protein kinase superfamily. Tyr protein kinase family. Heterodimer made of an alpha chain (50 kDa) and a beta chain (145 kDa) which are disulfide linked. Binds PLXNB1. Interacts when phosphorylated with downstream effectors including STAT3, PIK3R1, SRC, PCLG1, GRB2 and GAB1. Interacts with SPSB1, SPSB2 and SPSB4. Interacts with INPP5D/SHIP1. When phosphorylated at Tyr-1357, interacts with INPPL1/SHIP2. Interacts with RANBP9 and RANBP10, as well as SPSB1, SPSB2, SPSB3 and SPSB4. SPSB1 binding occurs in the presence and in the absence of HGF, however HGF treatment has a positive effect on this interaction. Interacts with MUC20; prevents interaction with GRB2 and suppresses hepatocyte growth factor-induced cell proliferation. Interacts with GRB10. Interacts with PTPN1 and PTPN2. Interacts with HSP90AA1 and HSP90AB1; the interaction suppresses MET kinase activity. Interacts with tensin TNS3. Interacts (when phosphorylated) with tensin TNS4 (via SH2 domain); the interaction increases MET protein stability by inhibiting MET endocytosis and subsequent lysosomal degradation. Autophosphorylated in response to ligand binding on Tyr-1235 and Tyr-1236 in the kinase domain leading to further phosphorylation of Tyr-1350 and Tyr-1357 in the C-terminal multifunctional docking site. Dephosphorylated by PTPRJ at Tyr-1350 and Tyr-1366. Dephosphorylated by PTPN1 and PTPN2. Post-translationally, ubiquitinated. Ubiquitination by CBL regulates the receptor stability and activity through proteasomal degradation. In terms of processing, O-mannosylation of IPT/TIG domains by TMEM260 is required for protein maturation. O-mannosylated residues are composed of single mannose glycans that are not elongated or modified. In terms of tissue distribution, expressed at highest levels in lung, liver and kidney, also expressed in stomach, intestine, spleen, testis and brain. Not expressed in heart or muscle.

It is found in the membrane. The enzyme catalyses L-tyrosyl-[protein] + ATP = O-phospho-L-tyrosyl-[protein] + ADP + H(+). In its inactive state, the C-terminal tail interacts with the catalytic domain and inhibits the kinase activity. Upon ligand binding, the C-terminal tail is displaced and becomes phosphorylated, thus increasing the kinase activity. Receptor tyrosine kinase that transduces signals from the extracellular matrix into the cytoplasm by binding to hepatocyte growth factor/HGF ligand. Regulates many physiological processes including proliferation, scattering, morphogenesis and survival. Ligand binding at the cell surface induces autophosphorylation of MET on its intracellular domain that provides docking sites for downstream signaling molecules. Following activation by ligand, interacts with the PI3-kinase subunit PIK3R1, PLCG1, SRC, GRB2, STAT3 or the adapter GAB1. Recruitment of these downstream effectors by MET leads to the activation of several signaling cascades including the RAS-ERK, PI3 kinase-AKT, or PLCgamma-PKC. The RAS-ERK activation is associated with the morphogenetic effects while PI3K/AKT coordinates prosurvival effects. During embryonic development, MET signaling plays a role in gastrulation, development and migration of muscles and neuronal precursors, angiogenesis and kidney formation. In adults, participates in wound healing as well as organ regeneration and tissue remodeling. Also promotes differentiation and proliferation of hematopoietic cells. The polypeptide is Hepatocyte growth factor receptor (Met) (Rattus norvegicus (Rat)).